A 338-amino-acid polypeptide reads, in one-letter code: Heat-inducible transcription repressor HrcA (338 aa).

This sequence belongs to the HrcA family.

Functionally, negative regulator of class I heat shock genes (grpE-dnaK-dnaJ and groELS operons). Prevents heat-shock induction of these operons. This Bacillus cereus (strain 03BB102) protein is Heat-inducible transcription repressor HrcA.